The sequence spans 296 residues: Urease operon transcriptional activator (296 aa).

One can recognise an HTH araC/xylS-type domain in the interval 171-268 (QAITHLITQE…NMTPSQFRLQ (98 aa)). 2 consecutive DNA-binding regions (H-T-H motif) follow at residues 188-209 (DDVA…NREG) and 235-258 (VFQI…KRKY).

Functionally, positive regulator of the expression of the urease operon. This chain is Urease operon transcriptional activator (ureR), found in Escherichia coli.